A 99-amino-acid polypeptide reads, in one-letter code: Pyruvate synthase subunit PorD (99 aa).

2 consecutive 4Fe-4S ferredoxin-type domains span residues 32-60 (MRPI…IQEG) and 61-91 (GIMK…MRPE). Positions 41, 44, 47, 51, 71, 74, 77, and 81 each coordinate [4Fe-4S] cluster.

Heterotetramer of one alpha, one beta, one delta and one gamma chain. It depends on [4Fe-4S] cluster as a cofactor.

This Thermotoga maritima (strain ATCC 43589 / DSM 3109 / JCM 10099 / NBRC 100826 / MSB8) protein is Pyruvate synthase subunit PorD (porD).